A 244-amino-acid polypeptide reads, in one-letter code: 1-(5-phosphoribosyl)-5-[(5-phosphoribosylamino)methylideneamino] imidazole-4-carboxamide isomerase (244 aa).

The Proton acceptor role is filled by Asp-10. Residue Asp-129 is the Proton donor of the active site.

Belongs to the HisA/HisF family.

The protein localises to the cytoplasm. It carries out the reaction 1-(5-phospho-beta-D-ribosyl)-5-[(5-phospho-beta-D-ribosylamino)methylideneamino]imidazole-4-carboxamide = 5-[(5-phospho-1-deoxy-D-ribulos-1-ylimino)methylamino]-1-(5-phospho-beta-D-ribosyl)imidazole-4-carboxamide. The protein operates within amino-acid biosynthesis; L-histidine biosynthesis; L-histidine from 5-phospho-alpha-D-ribose 1-diphosphate: step 4/9. In Rhodococcus erythropolis (strain PR4 / NBRC 100887), this protein is 1-(5-phosphoribosyl)-5-[(5-phosphoribosylamino)methylideneamino] imidazole-4-carboxamide isomerase.